The chain runs to 1211 residues: Homeodomain-interacting protein kinase 1 (1211 aa).

K25 is covalently cross-linked (Glycyl lysine isopeptide (Lys-Gly) (interchain with G-Cter in SUMO); alternate). A Glycyl lysine isopeptide (Lys-Gly) (interchain with G-Cter in SUMO2); alternate cross-link involves residue K25. Glycyl lysine isopeptide (Lys-Gly) (interchain with G-Cter in SUMO2) cross-links involve residues K120 and K124. Positions 190-518 constitute a Protein kinase domain; the sequence is YEVLEFLGRG…PLKTLNHQFV (329 aa). ATP is bound by residues 196–204 and K219; that span reads LGRGTFGQV. D315 functions as the Proton acceptor in the catalytic mechanism. The disordered stretch occupies residues 835–856; that stretch reads QQQSSSLPSRKNKQSAPVSSTS. Residues 844-847 carry the Nuclear localization signal 1 (NLS1) motif; that stretch reads RKNK. At S872 the chain carries Phosphoserine. An interaction with TP53 region spans residues 885–1094; sequence PVQDQHQPII…FQHGSPLHST (210 aa). The tract at residues 891–998 is required for localization to nuclear speckles; the sequence is QPIIIPDTPS…PLKTQLGDCT (108 aa). Residues 902 to 926 are SUMO interaction motifs (SIM); required for nuclear localization and kinase activity; that stretch reads PVSVITIRSDTDEEEDNKFKPSSSS. Residue K991 forms a Glycyl lysine isopeptide (Lys-Gly) (interchain with G-Cter in SUMO2) linkage. 3 disordered regions span residues 1002–1023, 1047–1070, and 1085–1105; these read QASGLLSSSKTKPVASVSGQSS, LSQNQQSSSASTSQERSSNPAPRR, and FQHGSPLHSTGHPHLAPAPAH. 2 stretches are compositionally biased toward low complexity: residues 1048 to 1064 and 1096 to 1105; these read SQNQQSSSASTSQERSS and HPHLAPAPAH. Position 1201 is a phosphoserine (S1201). Residue K1204 forms a Glycyl lysine isopeptide (Lys-Gly) (interchain with G-Cter in SUMO) linkage.

It belongs to the protein kinase superfamily. CMGC Ser/Thr protein kinase family. HIPK subfamily. As to quaternary structure, interacts with Nkx1-2, Nkx2-5, MYB, PARK7, DAXX and p53/TP53. Part of a cytoplasmic complex made of HIPK1, DAB2IP and MAP3K5 in response to TNF. This complex formation promotes MAP3K5-JNK activation and subsequent apoptosis. Post-translationally, phosphorylated and activated by JNK1. Autophosphorylated. In terms of processing, sumoylated. When conjugated it is directed to nuclear speckles. SENP1-mediated desumoylation is mediated by TNF in response to stress stimuli, triggering transient translocation from nucleus to cytoplasm.

The protein resides in the nucleus. It is found in the cytoplasm. Its subcellular location is the nucleus speckle. It carries out the reaction L-seryl-[protein] + ATP = O-phospho-L-seryl-[protein] + ADP + H(+). The enzyme catalyses L-threonyl-[protein] + ATP = O-phospho-L-threonyl-[protein] + ADP + H(+). In terms of biological role, serine/threonine-protein kinase involved in transcription regulation and TNF-mediated cellular apoptosis. Plays a role as a corepressor for homeodomain transcription factors. Phosphorylates DAXX and MYB. Phosphorylates DAXX in response to stress, and mediates its translocation from the nucleus to the cytoplasm. Inactivates MYB transcription factor activity by phosphorylation. Prevents MAP3K5-JNK activation in the absence of TNF. TNF triggers its translocation to the cytoplasm in response to stress stimuli, thus activating nuclear MAP3K5-JNK by derepression and promoting apoptosis. May be involved in anti-oxidative stress responses. Involved in the regulation of eye size, lens formation and retinal lamination during late embryogenesis. Promotes angiogenesis and to be involved in erythroid differentiation. May be involved in malignant squamous cell tumor formation. Phosphorylates PAGE4 at 'Thr-51' which is critical for the ability of PAGE4 to potentiate the transcriptional activator activity of JUN. This chain is Homeodomain-interacting protein kinase 1, found in Rattus norvegicus (Rat).